We begin with the raw amino-acid sequence, 185 residues long: Small ribosomal subunit protein uS4c (185 aa).

Residues 72 to 134 (MRLDNVIFRL…PTSCNALKGE (63 aa)) enclose the S4 RNA-binding domain. The segment at 132 to 154 (KGESPGGGETPDHLTASLSEGSR) is disordered.

It belongs to the universal ribosomal protein uS4 family. In terms of assembly, part of the 30S ribosomal subunit. Contacts protein S5. The interaction surface between S4 and S5 is involved in control of translational fidelity.

It localises to the plastid. The protein localises to the chloroplast. In terms of biological role, one of the primary rRNA binding proteins, it binds directly to 16S rRNA where it nucleates assembly of the body of the 30S subunit. Its function is as follows. With S5 and S12 plays an important role in translational accuracy. This chain is Small ribosomal subunit protein uS4c (rps4), found in Woodwardia radicans (Rooting chainfern).